A 483-amino-acid chain; its full sequence is Glutamyl-tRNA(Gln) amidotransferase subunit A (483 aa).

Catalysis depends on charge relay system residues Lys-76 and Ser-151. Ser-175 acts as the Acyl-ester intermediate in catalysis.

The protein belongs to the amidase family. GatA subfamily. As to quaternary structure, heterotrimer of A, B and C subunits.

The catalysed reaction is L-glutamyl-tRNA(Gln) + L-glutamine + ATP + H2O = L-glutaminyl-tRNA(Gln) + L-glutamate + ADP + phosphate + H(+). In terms of biological role, allows the formation of correctly charged Gln-tRNA(Gln) through the transamidation of misacylated Glu-tRNA(Gln) in organisms which lack glutaminyl-tRNA synthetase. The reaction takes place in the presence of glutamine and ATP through an activated gamma-phospho-Glu-tRNA(Gln). This is Glutamyl-tRNA(Gln) amidotransferase subunit A from Pseudomonas fluorescens (strain SBW25).